The chain runs to 291 residues: Release factor glutamine methyltransferase (291 aa).

Residues 127–131 (GTGSG), aspartate 150, tryptophan 179, and asparagine 196 contribute to the S-adenosyl-L-methionine site. 196-199 (NPPY) provides a ligand contact to substrate.

The protein belongs to the protein N5-glutamine methyltransferase family. PrmC subfamily.

It catalyses the reaction L-glutaminyl-[peptide chain release factor] + S-adenosyl-L-methionine = N(5)-methyl-L-glutaminyl-[peptide chain release factor] + S-adenosyl-L-homocysteine + H(+). In terms of biological role, methylates the class 1 translation termination release factors RF1/PrfA and RF2/PrfB on the glutamine residue of the universally conserved GGQ motif. The sequence is that of Release factor glutamine methyltransferase from Thermosynechococcus vestitus (strain NIES-2133 / IAM M-273 / BP-1).